A 448-amino-acid polypeptide reads, in one-letter code: Probable glycine dehydrogenase (decarboxylating) subunit 1 (448 aa).

This sequence belongs to the GcvP family. N-terminal subunit subfamily. In terms of assembly, the glycine cleavage system is composed of four proteins: P, T, L and H. In this organism, the P 'protein' is a heterodimer of two subunits.

The enzyme catalyses N(6)-[(R)-lipoyl]-L-lysyl-[glycine-cleavage complex H protein] + glycine + H(+) = N(6)-[(R)-S(8)-aminomethyldihydrolipoyl]-L-lysyl-[glycine-cleavage complex H protein] + CO2. Functionally, the glycine cleavage system catalyzes the degradation of glycine. The P protein binds the alpha-amino group of glycine through its pyridoxal phosphate cofactor; CO(2) is released and the remaining methylamine moiety is then transferred to the lipoamide cofactor of the H protein. This is Probable glycine dehydrogenase (decarboxylating) subunit 1 from Staphylococcus carnosus (strain TM300).